Here is a 120-residue protein sequence, read N- to C-terminus: Large ribosomal subunit protein uL18 (120 aa).

Belongs to the universal ribosomal protein uL18 family. As to quaternary structure, part of the 50S ribosomal subunit; part of the 5S rRNA/L5/L18/L25 subcomplex. Contacts the 5S and 23S rRNAs.

This is one of the proteins that bind and probably mediate the attachment of the 5S RNA into the large ribosomal subunit, where it forms part of the central protuberance. The sequence is that of Large ribosomal subunit protein uL18 from Ehrlichia ruminantium (strain Gardel).